A 247-amino-acid chain; its full sequence is Probable transcriptional regulatory protein MS0710 (247 aa).

The protein belongs to the TACO1 family.

It localises to the cytoplasm. This is Probable transcriptional regulatory protein MS0710 from Mannheimia succiniciproducens (strain KCTC 0769BP / MBEL55E).